The following is a 1128-amino-acid chain: Cordon-bleu protein-like 1 (1128 aa).

The interval 1–35 (MDGRTPRPQDAPARRKPKAKAPLPPAETKYTDVSS) is disordered. A Phosphothreonine modification is found at threonine 139. Residues serine 204, serine 222, and serine 256 each carry the phosphoserine modification. 3 disordered regions span residues 249–309 (KKRD…VPQD), 325–441 (MSVD…SPKS), and 454–499 (TLKN…TSNG). Threonine 260 carries the post-translational modification Phosphothreonine. Polar residues predominate over residues 270–286 (FTRSNTISKPYISNTLP). Serine 273 bears the Phosphoserine mark. Threonine 284 carries the phosphothreonine modification. Residues 291-296 (KKRRAP) carry the KKRRAP 1 motif. Residues serine 326, serine 333, serine 344, and serine 356 each carry the phosphoserine modification. The segment covering 345–357 (LQLSSMSAGNSSL) has biased composition (polar residues). The short motif at 360-365 (TKRKAP) is the KKRRAP 2 element. A compositionally biased stretch (polar residues) spans 397 to 415 (SEANSPEELSSPAGISSDY). Residues 416 to 425 (SLEEIDEKEE) are compositionally biased toward acidic residues. Phosphoserine is present on residues serine 438, serine 441, serine 461, serine 471, and serine 474. Positions 475–488 (MEEKQETKSTDGQE) are enriched in basic and acidic residues. Serine 563, serine 584, serine 786, serine 813, serine 814, and serine 821 each carry phosphoserine. Disordered stretches follow at residues 780–840 (TEDS…PFAP), 882–964 (SAAA…SQVS), 995–1081 (RSQS…PEQM), and 1103–1128 (IPSN…QDGH). Positions 899-908 (LTNKEAERDM) are enriched in basic and acidic residues. Residues serine 911, serine 917, serine 947, serine 1069, and serine 1070 each carry the phosphoserine modification. Polar residues-rich tracts occupy residues 1045–1081 (SAHN…PEQM) and 1103–1122 (IPSN…SMSP). A WH2 domain is found at 1081–1101 (MRQSLLTAIRSGEAAAKLKRV). Serine 1121 carries the post-translational modification Phosphoserine.

This chain is Cordon-bleu protein-like 1, found in Homo sapiens (Human).